The chain runs to 96 residues: MPTHQCHIIRAVPVVRYVVALLHWLLWRVVVIIAISVPVFHHPFRNLRPCHFRPSWVCNRILRTSSFPMVLPSQHRALPSHQHQHYANLLPIHFTS.

The chain crosses the membrane as a helical span at residues 13-35 (PVVRYVVALLHWLLWRVVVIIAI).

Its subcellular location is the membrane. This is an uncharacterized protein from Archaeoglobus fulgidus (strain ATCC 49558 / DSM 4304 / JCM 9628 / NBRC 100126 / VC-16).